The sequence spans 229 residues: Protein 33K (229 aa).

A disordered region spans residues 1 to 157 (MAPKKKLQLP…GALRLAPNEP (157 aa)). A compositionally biased stretch (acidic residues) spans 14–54 (TDEEEYWDSQAEEVLDEEEEDMMEDWESLDEEASEVEEVSD). Low complexity-rich tracts occupy residues 55–64 (ETPSPSVAFP), 71–82 (SATGSSMATTSA), and 100–122 (TTGT…AAAT). Positions 172-199 (YAIFQQSRGQEQELKIKNRSLRSLTRSC) are necessary for nuclear subcellular location. The segment at 178–198 (SRGQEQELKIKNRSLRSLTRS) is RS-repeat; required for splicing enhancer activity.

The protein belongs to the adenoviridae splicing factor family. In terms of assembly, homooligomer. Interacts with DBP; this interaction occurs at a unique vertex during genome packaging. Interacts with IVa2; this interaction occurs at a unique vertex during genome packaging and seems to potentiate IVa2 and 33K oligomerization. Phosphorylated in vitro by human PKA and PRKDC. PRKDC inhibits, whereas PKA activates the splicing factor.

The protein localises to the host nucleus. Promotes alternative splicing of late transcripts by promoting splicing at weak 3' splice sites. Required for the temporal activation of major late pre-mRNA splicing at late times of infection. Induces the splicing and expression of the late capsid vertex protein. Functionally, probably functions as the small terminase that is part of the molecular motor that translocates genomic DNA in empty capsid during DNA packaging. This motor is located at a unique vertex and comprises at least the IVa2 ATPase, the small terminase 33K and probably a portal. Forms a ring-like structure of about 17 nm in which genomic DNA is translocated into the capsid. Stimulates IVa2 ATPase activity in the presence of the viral genome. Once the DNA is packaged, the terminase detaches: the 33K protein is present in the empty particles, but not in the mature virions. Also involved in virion assembly. The sequence is that of Protein 33K from Homo sapiens (Human).